We begin with the raw amino-acid sequence, 359 residues long: Histidinol-phosphate aminotransferase (359 aa).

Position 217 is an N6-(pyridoxal phosphate)lysine (Lys-217).

It belongs to the class-II pyridoxal-phosphate-dependent aminotransferase family. Histidinol-phosphate aminotransferase subfamily. Homodimer. Requires pyridoxal 5'-phosphate as cofactor.

It catalyses the reaction L-histidinol phosphate + 2-oxoglutarate = 3-(imidazol-4-yl)-2-oxopropyl phosphate + L-glutamate. It functions in the pathway amino-acid biosynthesis; L-histidine biosynthesis; L-histidine from 5-phospho-alpha-D-ribose 1-diphosphate: step 7/9. This is Histidinol-phosphate aminotransferase from Salmonella choleraesuis (strain SC-B67).